We begin with the raw amino-acid sequence, 188 residues long: A-type ATP synthase subunit E (188 aa).

Belongs to the V-ATPase E subunit family. Has multiple subunits with at least A(3), B(3), C, D, E, F, H, I and proteolipid K(x).

Its subcellular location is the cell membrane. Its function is as follows. Component of the A-type ATP synthase that produces ATP from ADP in the presence of a proton gradient across the membrane. The sequence is that of A-type ATP synthase subunit E from Archaeoglobus fulgidus (strain ATCC 49558 / DSM 4304 / JCM 9628 / NBRC 100126 / VC-16).